The sequence spans 184 residues: Troponin I, slow skeletal muscle (184 aa).

Position 1 is an N-acetylproline; partial (Pro-1). Residues 1-45 (PEVERKSKITASRKLLKSLMLAKAKECQQEHEAREAEKVRYLAER) form an involved in binding TNC region. A Phosphoserine modification is found at Ser-55. An involved in binding TNC and actin region spans residues 94–115 (LKLKVLDLRGKFKRPPLRRVRV).

It belongs to the troponin I family. Binds to actin and tropomyosin. Post-translationally, in the muscle sample, approximately 25% of the chains were blocked. Pro-1 is probably acetylated. The N-terminus is blocked.

In terms of biological role, troponin I is the inhibitory subunit of troponin, the thin filament regulatory complex which confers calcium-sensitivity to striated muscle actomyosin ATPase activity. In Oryctolagus cuniculus (Rabbit), this protein is Troponin I, slow skeletal muscle (TNNI1).